A 233-amino-acid chain; its full sequence is Glyceraldehyde-3-phosphate dehydrogenase A, chloroplastic (233 aa).

Residues 49–51 (SCT), Thr-80, Arg-95, 108–109 (TG), and Arg-131 contribute to the D-glyceraldehyde 3-phosphate site. Cys-50 functions as the Nucleophile in the catalytic mechanism. Asn-213 lines the NADP(+) pocket.

The protein belongs to the glyceraldehyde-3-phosphate dehydrogenase family. Tetramer of either four A chains (GAPDH 2) or two A and two B chains (GAPDH 1).

The protein localises to the plastid. It localises to the chloroplast. It carries out the reaction D-glyceraldehyde 3-phosphate + phosphate + NADP(+) = (2R)-3-phospho-glyceroyl phosphate + NADPH + H(+). Its pathway is carbohydrate biosynthesis; Calvin cycle. The polypeptide is Glyceraldehyde-3-phosphate dehydrogenase A, chloroplastic (GAPA) (Sinapis alba (White mustard)).